The chain runs to 298 residues: MVRQYKIHTNLDGTDDKVLDVTNGKVRLYQPSNLGLQSTNNIWQSNGIGVMGKRSITQPQIEFKLETFGESLEENYQLMKDFVNDILSKKFVTLEYQTEIFQVYADLALADVTKTEGYGKNGTFSEKITFDIITKWYTYENLTFDKIENGKVIAGMSKVYGGTELGGYKYIEGTSYTYYGETNIERLSRWDIKDEIFSFMGILYPQLPKTPAGVRFLDDTGNEYTAIVFKTEQAQDYILINTDVNDEVYQGWNGTTSLNLFPVMDFERYRTRIIEKGQMELINLSKAEFKIKRKADFV.

The protein belongs to the skunalikevirus distal tail protein family. In terms of assembly, homohexamer. Interacts with the receptor binding protein.

The protein resides in the virion. Forms the distal part of the tail. Self-associates as two rings organized back to back, with a central channel allowing DNA ejection. This chain is Distal tail protein, found in Lactococcus phage SK1 (Lactococcus lactis bacteriophage SK1).